We begin with the raw amino-acid sequence, 258 residues long: MSGITLPSLTNVLQSAGMAVHGHPSAPGSTQLPPLHQLNISSQPSSQPPQPSLQYSEPAQSTAASDDMDSDVDRTKHPSGIVPTLQNIVSTVNLGCKLDLKNIALHARNAEYNPKRFAAVIMRIREPKTTALIFASGKMVCTGAKSEEASRLAARKYARIIQKLGFAAKFLDFKIQNIVGSCDVRFPIRLEGLAFAHNHYCSYEPELFPGLIYRMVQPKIVLLIFVSGKIVLTGAKVREEIYEAFENIYPVLTEYKKT.

The segment at 19-80 (AVHGHPSAPG…DVDRTKHPSG (62 aa)) is disordered. Tandem repeats lie at residues 85–161 (LQNI…ARII) and 175–252 (IQNI…YPVL).

This sequence belongs to the TBP family. Belongs to the TFIID complex together with the TBP-associated factors (TAFs). Binds DNA as monomer.

Its subcellular location is the nucleus. Its function is as follows. General transcription factor that functions at the core of the DNA-binding multiprotein factor TFIID. Binding of TFIID to the TATA box is the initial transcriptional step of the pre-initiation complex (PIC), playing a role in the activation of eukaryotic genes transcribed by RNA polymerase II. The polypeptide is TATA-box-binding protein (TFIID) (Acanthamoeba castellanii (Amoeba)).